The primary structure comprises 311 residues: Ribosomal protein L11 methyltransferase (311 aa).

S-adenosyl-L-methionine contacts are provided by Thr-162, Gly-183, Asp-205, and Asn-248.

The protein belongs to the methyltransferase superfamily. PrmA family.

It is found in the cytoplasm. It carries out the reaction L-lysyl-[protein] + 3 S-adenosyl-L-methionine = N(6),N(6),N(6)-trimethyl-L-lysyl-[protein] + 3 S-adenosyl-L-homocysteine + 3 H(+). Functionally, methylates ribosomal protein L11. This Bacillus pumilus (strain SAFR-032) protein is Ribosomal protein L11 methyltransferase.